The sequence spans 340 residues: Putative UPF0607 protein ENSP00000332738 (340 aa).

Residues 75–90 show a composition bias toward basic and acidic residues; that stretch reads VRAEEPKEATEVKDQV. Disordered regions lie at residues 75–130 and 215–281; these read VRAE…NPRP and GLLM…KLPC. Polar residues predominate over residues 91–126; that stretch reads ETQGQEDNKTGPCSNGKAASTSRPLETQGNLTSSWY. Low complexity predominate over residues 228–241; that stretch reads PAALRSSRSSPPRA. Residues 242 to 251 show a composition bias toward basic residues; sequence AGHRPRKRKL. Positions 254 to 266 are enriched in low complexity; it reads PPLQLQQTPPLQL.

This sequence belongs to the UPF0607 family.

This is Putative UPF0607 protein ENSP00000332738 from Homo sapiens (Human).